A 348-amino-acid chain; its full sequence is Ion-translocating oxidoreductase complex subunit D (348 aa).

5 helical membrane-spanning segments follow: residues 19 to 39, 41 to 61, 66 to 86, 87 to 107, and 122 to 142; these read FMLW…AFFG, GVVI…IVVA, KSTT…ILAM, AIPP…ALLL, and PAMV…TSWL. At threonine 186 the chain carries FMN phosphoryl threonine. Helical transmembrane passes span 212-232, 236-256, 265-285, 291-311, and 315-335; these read IFAR…LFLL, IIHW…SALT, LNVL…FIAT, SITP…AYLI, and GSYP…VPLI.

Belongs to the NqrB/RnfD family. In terms of assembly, the complex is composed of six subunits: RnfA, RnfB, RnfC, RnfD, RnfE and RnfG. It depends on FMN as a cofactor.

It localises to the cell inner membrane. Functionally, part of a membrane-bound complex that couples electron transfer with translocation of ions across the membrane. The protein is Ion-translocating oxidoreductase complex subunit D of Haemophilus ducreyi (strain 35000HP / ATCC 700724).